A 91-amino-acid chain; its full sequence is Small ribosomal subunit protein bS18 (91 aa).

This sequence belongs to the bacterial ribosomal protein bS18 family. As to quaternary structure, part of the 30S ribosomal subunit. Forms a tight heterodimer with protein bS6.

Binds as a heterodimer with protein bS6 to the central domain of the 16S rRNA, where it helps stabilize the platform of the 30S subunit. This chain is Small ribosomal subunit protein bS18, found in Burkholderia lata (strain ATCC 17760 / DSM 23089 / LMG 22485 / NCIMB 9086 / R18194 / 383).